The sequence spans 369 residues: GTPase Obg (369 aa).

Residues 1–159 (MKFIDEAKIE…RELRLELKVL (159 aa)) form the Obg domain. Residues 128-148 (IHFKSSTNRAPRQKSEGKEGE) form a disordered region. The 174-residue stretch at 160–333 (ADIGLLGMPN…LVTEIYEYIA (174 aa)) folds into the OBG-type G domain. Residues 166 to 173 (GMPNAGKS), 191 to 195 (FTTLH), 213 to 216 (DIPG), 283 to 286 (NKLD), and 314 to 316 (SAL) each bind GTP. Residues S173 and T193 each contribute to the Mg(2+) site.

The protein belongs to the TRAFAC class OBG-HflX-like GTPase superfamily. OBG GTPase family. As to quaternary structure, monomer. Mg(2+) is required as a cofactor.

The protein localises to the cytoplasm. In terms of biological role, an essential GTPase which binds GTP, GDP and possibly (p)ppGpp with moderate affinity, with high nucleotide exchange rates and a fairly low GTP hydrolysis rate. Plays a role in control of the cell cycle, stress response, ribosome biogenesis and in those bacteria that undergo differentiation, in morphogenesis control. The sequence is that of GTPase Obg from Janthinobacterium sp. (strain Marseille) (Minibacterium massiliensis).